The primary structure comprises 449 residues: Bifunctional F420 biosynthesis protein FbiB (449 aa).

The interval Met1–Gly245 is coenzyme F420:L-glutamate ligase. Residues Leu21–Phe24, Ser51, and Lys56 contribute to the GTP site. Asp110 contacts a divalent metal cation. Position 113 (Asn113) interacts with GTP. Positions 151 and 152 each coordinate a divalent metal cation. The dehydro-coenzyme F420-0 reductase stretch occupies residues Thr246 to Lys449. Residues Arg261–Arg265 and Ala289 contribute to the FMN site. Asp321 is a binding site for coenzyme F420-(gamma-Glu)n. Residues Gly400 and Arg437 each coordinate FMN.

This sequence in the N-terminal section; belongs to the CofE family. Mg(2+) is required as a cofactor. The cofactor is Mn(2+). It depends on K(+) as a cofactor.

It catalyses the reaction oxidized coenzyme F420-0 + GTP + L-glutamate = oxidized coenzyme F420-1 + GDP + phosphate + H(+). The catalysed reaction is oxidized coenzyme F420-1 + GTP + L-glutamate = oxidized coenzyme F420-2 + GDP + phosphate + H(+). It carries out the reaction oxidized coenzyme F420-(gamma-L-Glu)(n) + GTP + L-glutamate = oxidized coenzyme F420-(gamma-L-Glu)(n+1) + GDP + phosphate + H(+). The enzyme catalyses oxidized coenzyme F420-0 + FMN + H(+) = dehydro coenzyme F420-0 + FMNH2. It participates in cofactor biosynthesis; coenzyme F420 biosynthesis. Bifunctional enzyme that catalyzes the GTP-dependent successive addition of multiple gamma-linked L-glutamates to the L-lactyl phosphodiester of 7,8-didemethyl-8-hydroxy-5-deazariboflavin (F420-0) to form polyglutamated F420 derivatives, and the FMNH2-dependent reduction of dehydro-F420-0 to form F420-0. The polypeptide is Bifunctional F420 biosynthesis protein FbiB (Mycobacterium avium (strain 104)).